Consider the following 146-residue polypeptide: Angiogenin (146 aa).

Residues 1–24 (MVMGLGLFLLVFMLGLGLTPPTLA) form the signal peptide. Residue Gln25 is modified to Pyrrolidone carboxylic acid. The Proton acceptor role is filled by His37. Arg45 lines the tRNA pocket. 3 disulfides stabilise this stretch: Cys50–Cys105, Cys63–Cys116, and Cys81–Cys131. The Nucleolar localization signal signature appears at 55-59 (RRRHL). Positions 105 and 127 each coordinate tRNA. His138 acts as the Proton donor in catalysis.

This sequence belongs to the pancreatic ribonuclease family. In terms of assembly, homodimer. Interacts with RNH1; inhibiting ANG ribonuclease activity. Interacts with PCNA.

It localises to the secreted. It is found in the nucleus. The protein localises to the nucleolus. Its subcellular location is the cytoplasm. The protein resides in the stress granule. Has weak tRNA ribonuclease activity by itself due to partial autoinhibition by its C-terminus, which folds into a short alpha-helix that partially occludes the substrate-binding site. In absence of stress, the ribonuclease activity is inhibited by RNH1 in the cytoplasm. In response to stress, dissociates from RNH1 in the cytoplasm and associates with cytoplasmic ribosomes with vacant A-sites: ribosomes directly activate the tRNA ribonuclease activity of ANG by refolding the C-terminal alpha-helix. In response to stress, the angiogenic activity of ANG is inhibited by RNH1 in the nucleus. In terms of biological role, secreted ribonuclease that can either promote or restrict cell proliferation of target cells, depending on the context. Endocytosed in target cells via its receptor PLXNB2 and translocates to the cytoplasm or nucleus. Under stress conditions, localizes to the cytoplasm and promotes the assembly of stress granules (SGs): specifically cleaves a subset of tRNAs within anticodon loops to produce tRNA-derived stress-induced fragments (tiRNAs), resulting in translation repression and inhibition of cell proliferation. tiRNas also prevent formation of apoptosome, thereby promoting cell survival. Preferentially cleaves RNAs between a pyrimidine and an adenosine residue, suggesting that it cleaves the anticodon loop of tRNA(Ala) (32-UUAGCAU-38) after positions 33 and 36. Cleaves a subset of tRNAs, including tRNA(Ala), tRNA(Glu), tRNA(Gly), tRNA(Lys), tRNA(Val), tRNA(His), tRNA(Asp) and tRNA(Sec). Under growth conditions and in differentiated cells, translocates to the nucleus and stimulates ribosomal RNA (rRNA) transcription, including that containing the initiation site sequences of 45S rRNA, thereby promoting cell growth and proliferation. Angiogenin induces vascularization of normal and malignant tissues via its ability to promote rRNA transcription. Involved in hematopoietic stem and progenitor cell (HSPC) growth and survival by promoting rRNA transcription in growth conditions and inhibiting translation in response to stress, respectively. Mediates the crosstalk between myeloid and intestinal epithelial cells to protect the intestinal epithelial barrier integrity: secreted by myeloid cells and promotes intestinal epithelial cells proliferation and survival. Also mediates osteoclast-endothelial cell crosstalk in growing bone: produced by osteoclasts and protects the neighboring vascular cells against senescence by promoting rRNA transcription. This chain is Angiogenin (ANG), found in Macaca mulatta (Rhesus macaque).